We begin with the raw amino-acid sequence, 308 residues long: Ribosomal RNA small subunit methyltransferase H (308 aa).

S-adenosyl-L-methionine-binding positions include 32–34 (GGH), D51, F78, D99, and Q106.

This sequence belongs to the methyltransferase superfamily. RsmH family.

It localises to the cytoplasm. It catalyses the reaction cytidine(1402) in 16S rRNA + S-adenosyl-L-methionine = N(4)-methylcytidine(1402) in 16S rRNA + S-adenosyl-L-homocysteine + H(+). Functionally, specifically methylates the N4 position of cytidine in position 1402 (C1402) of 16S rRNA. This Campylobacter curvus (strain 525.92) protein is Ribosomal RNA small subunit methyltransferase H.